The chain runs to 321 residues: uncharacterized protein (321 aa).

The span at 1–12 (MSMFLKKQKKTK) shows a compositional bias: basic residues. Disordered regions lie at residues 1 to 59 (MSMF…MRKT) and 71 to 289 (EDCT…GPED). Residues 50 to 59 (DGIKETMRKT) show a composition bias toward basic and acidic residues. The segment covering 99–115 (DDSDSESSEDGGEDDEE) has biased composition (acidic residues). A compositionally biased stretch (low complexity) spans 156–175 (SDSSSSSSSSSDSESSSSSD). Residues 179 to 189 (DGDRSTPEPDI) are compositionally biased toward basic and acidic residues. The span at 231 to 242 (EPSPLRAAAAAA) shows a compositional bias: low complexity.

This is an uncharacterized protein from Equus caballus (Horse).